The primary structure comprises 100 residues: Large ribosomal subunit protein bL27 (100 aa).

The propeptide occupies 1 to 9; sequence MLKMNLQLF.

This sequence belongs to the bacterial ribosomal protein bL27 family. The N-terminus is cleaved by ribosomal processing cysteine protease Prp.

The chain is Large ribosomal subunit protein bL27 from Clostridium perfringens (strain ATCC 13124 / DSM 756 / JCM 1290 / NCIMB 6125 / NCTC 8237 / Type A).